We begin with the raw amino-acid sequence, 432 residues long: Ectonucleoside triphosphate diphosphohydrolase 5 (432 aa).

The signal sequence occupies residues 1-24 (MALYQGAAFFMLVASCVCSTVFHR). Glu-175 acts as the Proton acceptor in catalysis. The N-linked (GlcNAc...) asparagine glycan is linked to Asn-235. 2 disulfides stabilise this stretch: Cys-275–Cys-307 and Cys-367–Cys-381. An N-linked (GlcNAc...) asparagine glycan is attached at Asn-372.

This sequence belongs to the GDA1/CD39 NTPase family. As to quaternary structure, monomer; active form. Homodimer; disulfide-linked. Homodimers are enzymatically inactive. The cofactor is Ca(2+). Mg(2+) serves as cofactor. N-glycosylated; high-mannose type.

The protein resides in the endoplasmic reticulum. The protein localises to the secreted. It catalyses the reaction a ribonucleoside 5'-diphosphate + H2O = a ribonucleoside 5'-phosphate + phosphate + H(+). It carries out the reaction GDP + H2O = GMP + phosphate + H(+). The catalysed reaction is UDP + H2O = UMP + phosphate + H(+). The enzyme catalyses IDP + H2O = IMP + phosphate + H(+). It catalyses the reaction CDP + H2O = CMP + phosphate + H(+). It carries out the reaction ADP + H2O = AMP + phosphate + H(+). It functions in the pathway protein modification; protein glycosylation. In terms of biological role, hydrolyzes nucleoside diphosphates with a preference for GDP, IDP and UDP compared to ADP and CDP. In the lumen of the endoplasmic reticulum, hydrolyzes UDP that acts as an end-product feedback inhibitor of the UDP-Glc:glycoprotein glucosyltransferases. UMP can be transported back by an UDP-sugar antiporter to the cytosol where it is consumed to regenerate UDP-glucose. Therefore, it positively regulates protein reglucosylation by clearing UDP from the ER lumen and by promoting the regeneration of UDP-glucose. Protein reglucosylation is essential to proper glycoprotein folding and quality control in the ER. This chain is Ectonucleoside triphosphate diphosphohydrolase 5 (ENTPD5), found in Bos taurus (Bovine).